A 109-amino-acid chain; its full sequence is U-scoloptoxin(16)-Cw1a (109 aa).

An N-terminal signal peptide occupies residues 1–21; sequence MNAVFIVFLSAILSYPHESFA.

This sequence belongs to the scoloptoxin-16 family. Post-translationally, contains 4 disulfide bonds. Expressed by the venom gland.

The protein resides in the secreted. In Cormocephalus westwoodi (Westwood's green centipede), this protein is U-scoloptoxin(16)-Cw1a.